A 689-amino-acid polypeptide reads, in one-letter code: Translation initiation factor IF-2 (689 aa).

The interval 41-109 (DYERVFGGGN…EAPAAEEREA (69 aa)) is disordered. Basic residues predominate over residues 61 to 70 (RKGRQKKRRR). Over residues 80–94 (RGPRAAAPSRPSRGR) the composition is skewed to low complexity. Over residues 96–109 (AAREEAPAAEEREA) the composition is skewed to basic and acidic residues. In terms of domain architecture, tr-type G spans 192 to 361 (EKPPVITVMG…LVVAELEELR (170 aa)). Positions 201-208 (GHVDHGKT) are G1. Position 201-208 (201-208 (GHVDHGKT)) interacts with GTP. The interval 226–230 (GITQH) is G2. The segment at 247 to 250 (DTPG) is G3. Residues 247–251 (DTPGH) and 301–304 (NKID) each bind GTP. The tract at residues 301–304 (NKID) is G4. A G5 region spans residues 337-339 (SAK).

Belongs to the TRAFAC class translation factor GTPase superfamily. Classic translation factor GTPase family. IF-2 subfamily.

Its subcellular location is the cytoplasm. One of the essential components for the initiation of protein synthesis. Protects formylmethionyl-tRNA from spontaneous hydrolysis and promotes its binding to the 30S ribosomal subunits. Also involved in the hydrolysis of GTP during the formation of the 70S ribosomal complex. The sequence is that of Translation initiation factor IF-2 from Rubrobacter xylanophilus (strain DSM 9941 / JCM 11954 / NBRC 16129 / PRD-1).